The sequence spans 320 residues: Porphobilinogen deaminase (320 aa).

Cysteine 248 is subject to S-(dipyrrolylmethanemethyl)cysteine.

The protein belongs to the HMBS family. In terms of assembly, monomer. It depends on dipyrromethane as a cofactor.

It carries out the reaction 4 porphobilinogen + H2O = hydroxymethylbilane + 4 NH4(+). The protein operates within porphyrin-containing compound metabolism; protoporphyrin-IX biosynthesis; coproporphyrinogen-III from 5-aminolevulinate: step 2/4. Its pathway is porphyrin-containing compound metabolism; chlorophyll biosynthesis. Functionally, tetrapolymerization of the monopyrrole PBG into the hydroxymethylbilane pre-uroporphyrinogen in several discrete steps. The chain is Porphobilinogen deaminase from Synechococcus elongatus (strain ATCC 33912 / PCC 7942 / FACHB-805) (Anacystis nidulans R2).